The following is a 751-amino-acid chain: Glutamate carboxypeptidase 2 (751 aa).

Topologically, residues 1–19 (MWNPLHETDSTSVAWRRPR) are cytoplasmic. Position 10 is a phosphoserine (S10). A helical; Signal-anchor for type II membrane protein transmembrane segment spans residues 20 to 43 (WLCAGALVLAAGLFVLGFLFGWFI). At 44 to 750 (KSPNEAANIS…QAAAGTLREV (707 aa)) the chain is on the extracellular side. 6 N-linked (GlcNAc...) asparagine glycosylation sites follow: N51, N77, N122, N141, N154, and N196. Substrate contacts are provided by R211 and N258. Ca(2+) contacts are provided by T270 and Y273. The interval 275–588 (ANEYAYRLQI…QVRGGIVFEL (314 aa)) is NAALADase. N337 is a glycosylation site (N-linked (GlcNAc...) asparagine). H378 and D388 together coordinate Zn(2+). Residue E425 coordinates substrate. E425 acts as the Nucleophile; for NAALADase activity in catalysis. Residue E426 coordinates Zn(2+). Residues E434 and E437 each contribute to the Ca(2+) site. Position 454 (D454) interacts with Zn(2+). 2 N-linked (GlcNAc...) asparagine glycosylation sites follow: N460 and N477. Residues 518–519 (SG), N520, 535–537 (RAR), Y553, and 553–554 (YH) each bind substrate. Position 554 (H554) interacts with Zn(2+). Residue N614 is glycosylated (N-linked (GlcNAc...) asparagine). The active-site Charge relay system is S629. Residues N639 and N646 are each glycosylated (N-linked (GlcNAc...) asparagine). Active-site charge relay system residues include D667 and H690. Substrate is bound at residue 700 to 701 (KY).

Belongs to the peptidase M28 family. M28B subfamily. As to quaternary structure, homodimer. Zn(2+) is required as a cofactor. In terms of tissue distribution, high expression in the duodenum and in the jejunum brush-border membrane. Weak expression in kidney.

It localises to the cell membrane. It catalyses the reaction Release of an unsubstituted, C-terminal glutamyl residue, typically from Ac-Asp-Glu or folylpoly-gamma-glutamates.. With respect to regulation, the NAALADase activity is inhibited by quisqualic acid, beta-NAAG and 2-(phosphonomethyl) pentanedioic acid (PMPA). Ethanol ingestion decreases the folate hydrolase activity by 50%. Its function is as follows. Has both folate hydrolase and N-acetylated-alpha-linked-acidic dipeptidase (NAALADase) activity. Has a preference for tri-alpha-glutamate peptides. In the intestine, required for the uptake of folate. In the brain, modulates excitatory neurotransmission through the hydrolysis of the neuropeptide, N-aceylaspartylglutamate (NAAG), thereby releasing glutamate. Also exhibits a dipeptidyl-peptidase IV type activity. In vitro, cleaves Gly-Pro-AMC. The chain is Glutamate carboxypeptidase 2 (FOLH1) from Sus scrofa (Pig).